The sequence spans 283 residues: 4-diphosphocytidyl-2-C-methyl-D-erythritol kinase (283 aa).

Lys10 is a catalytic residue. Position 99–109 (99–109) interacts with ATP; it reads PMGGGLGGGSS. The active site involves Asp141.

This sequence belongs to the GHMP kinase family. IspE subfamily. Homodimer.

The enzyme catalyses 4-CDP-2-C-methyl-D-erythritol + ATP = 4-CDP-2-C-methyl-D-erythritol 2-phosphate + ADP + H(+). The protein operates within isoprenoid biosynthesis; isopentenyl diphosphate biosynthesis via DXP pathway; isopentenyl diphosphate from 1-deoxy-D-xylulose 5-phosphate: step 3/6. Its function is as follows. Catalyzes the phosphorylation of the position 2 hydroxy group of 4-diphosphocytidyl-2C-methyl-D-erythritol. The protein is 4-diphosphocytidyl-2-C-methyl-D-erythritol kinase of Salmonella arizonae (strain ATCC BAA-731 / CDC346-86 / RSK2980).